The primary structure comprises 158 residues: MQGRLSAWLVKHELVHRSLGFDYQGIETLQIKPEDWYSIAVISYVYGYNYLRSQCAYDVAPGGLLASVYHLTRIQYGVDQPEEVCIKVFAPRRNPRIPSVFWIWKSADFQERESYDMLGISYENHPRLKRILMPESWIGWPLRKDYIAPNFYEIQDAH.

The protein belongs to the complex I 30 kDa subunit family. In terms of assembly, NDH is composed of at least 16 different subunits, 5 of which are encoded in the nucleus.

It localises to the plastid. It is found in the chloroplast thylakoid membrane. The catalysed reaction is a plastoquinone + NADH + (n+1) H(+)(in) = a plastoquinol + NAD(+) + n H(+)(out). It catalyses the reaction a plastoquinone + NADPH + (n+1) H(+)(in) = a plastoquinol + NADP(+) + n H(+)(out). Functionally, NDH shuttles electrons from NAD(P)H:plastoquinone, via FMN and iron-sulfur (Fe-S) centers, to quinones in the photosynthetic chain and possibly in a chloroplast respiratory chain. The immediate electron acceptor for the enzyme in this species is believed to be plastoquinone. Couples the redox reaction to proton translocation, and thus conserves the redox energy in a proton gradient. The polypeptide is NAD(P)H-quinone oxidoreductase subunit J, chloroplastic (Drimys granadensis).